The following is a 430-amino-acid chain: Toxin coregulated pilus biosynthesis protein B (430 aa).

Positions Asn351 to Lys366 are enriched in polar residues. Residues Asn351–Gly371 form a disordered region.

Involved in TCP pilus biogenesis. The polypeptide is Toxin coregulated pilus biosynthesis protein B (tcpB) (Vibrio cholerae serotype O1 (strain ATCC 39315 / El Tor Inaba N16961)).